Reading from the N-terminus, the 335-residue chain is D-alanine--D-alanine ligase (335 aa).

An ATP-grasp domain is found at 124 to 329; the sequence is KMWFSALGVP…FTHYLYSNIK (206 aa). 154-209 contacts ATP; the sequence is ALENWGSIFIKAASQGSSVGCYRVDSQDELVSSLEQAFSFSPYVIVEKTINARELE. Residues D283, E296, and N298 each contribute to the Mg(2+) site.

Belongs to the D-alanine--D-alanine ligase family. Requires Mg(2+) as cofactor. Mn(2+) is required as a cofactor.

Its subcellular location is the cytoplasm. It carries out the reaction 2 D-alanine + ATP = D-alanyl-D-alanine + ADP + phosphate + H(+). The protein operates within cell wall biogenesis; peptidoglycan biosynthesis. In terms of biological role, cell wall formation. The sequence is that of D-alanine--D-alanine ligase from Shewanella woodyi (strain ATCC 51908 / MS32).